The sequence spans 104 residues: PTS system lactose-specific EIIA component (104 aa).

A PTS EIIA type-3 domain is found at 4 to 102 (EEATLLGFEI…MKHLIELYKR (99 aa)). The Tele-phosphohistidine intermediate role is filled by His78. His78 is modified (phosphohistidine; by HPr). Residue Asp81 coordinates Mg(2+).

In terms of assembly, homotrimer. Mg(2+) serves as cofactor.

The protein resides in the cytoplasm. Its function is as follows. The phosphoenolpyruvate-dependent sugar phosphotransferase system (sugar PTS), a major carbohydrate active transport system, catalyzes the phosphorylation of incoming sugar substrates concomitantly with their translocation across the cell membrane. The enzyme II LacEF PTS system is involved in lactose transport. The protein is PTS system lactose-specific EIIA component of Streptococcus mutans serotype c (strain ATCC 700610 / UA159).